A 739-amino-acid chain; its full sequence is MICOS complex subunit Mic60 (739 aa).

Residues 23–63 (ANNRQFGGSSSGSGGREQGRRQQEEQGQQGDQGYQGYQSLP) are disordered. Low complexity predominate over residues 47 to 61 (EQGQQGDQGYQGYQS). A helical transmembrane segment spans residues 69 to 89 (AGFGKVVLFVSPLAAVGGVIT). Positions 154–219 (VTGLFGGGSG…PAAKPKDNPL (66 aa)) are disordered. Residues 163–198 (GDDKSKKSKVEPVKATPAEEKRPSKPSEVSKTEAKP) show a composition bias toward basic and acidic residues. The span at 199 to 212 (VSKPAAAAAPAPAA) shows a compositional bias: low complexity. The stretch at 283-339 (TAVATAERAAREAQEKIVACEIALSAAATAQNAKKVEAVRDKIKKLVDHIGNVKDEL) forms a coiled coil.

It belongs to the MICOS complex subunit Mic60 family. As to quaternary structure, component of the mitochondrial contact site and cristae organizing system (MICOS) complex. Interacts with the mitochondria-shaping protein Opa1.

Its subcellular location is the mitochondrion inner membrane. In terms of biological role, component of the MICOS complex, a large protein complex of the mitochondrial inner membrane that plays crucial roles in the maintenance of crista junctions, inner membrane architecture, and formation of contact sites to the outer membrane. The sequence is that of MICOS complex subunit Mic60 from Drosophila melanogaster (Fruit fly).